A 745-amino-acid polypeptide reads, in one-letter code: Poly(A) polymerase alpha (745 aa).

Positions Met-1–Gln-17 are enriched in low complexity. Positions Met-1 to Ile-22 are disordered. Residues Ser-10 and Ser-24 each carry the phosphoserine modification. ATP contacts are provided by residues Phe-100–Ser-102, Thr-109, Asp-113–Asp-115, Asp-167, Lys-228, Tyr-237, and Gly-246–Val-247. Residues Asp-113, Asp-115, and Asp-167 each coordinate Mg(2+). Glycyl lysine isopeptide (Lys-Gly) (interchain with G-Cter in SUMO) cross-links involve residues Lys-444, Lys-445, Lys-506, and Lys-507. The Nuclear localization signal 1 motif lies at Arg-490–Lys-507. The segment at His-508–Pro-643 is ser/Thr-rich. Positions Leu-523–Ser-534 are enriched in low complexity. Disordered stretches follow at residues Leu-523–Ala-565 and Ser-577–Ile-704. Over residues Val-535–Asn-557 the composition is skewed to polar residues. A phosphoserine mark is found at Ser-537 and Ser-558. Composition is skewed to low complexity over residues Ser-583–Ser-594 and Thr-611–Thr-640. 2 positions are modified to N6-acetyllysine: Lys-641 and Lys-650. The short motif at Lys-650–Lys-665 is the Nuclear localization signal 2 element. Composition is skewed to basic and acidic residues over residues Pro-655–Thr-666 and Gly-682–Leu-692. Residues Cys-677 to Arg-745 are required for interaction with NUDT21. Residues Thr-694–Ile-704 are compositionally biased toward low complexity. An N6-acetyllysine; alternate modification is found at Lys-736. Lys-736 is covalently cross-linked (Glycyl lysine isopeptide (Lys-Gly) (interchain with G-Cter in SUMO); alternate). Phosphoserine is present on Ser-738. The residue at position 740 (Lys-740) is an N6-acetyllysine; alternate. A Glycyl lysine isopeptide (Lys-Gly) (interchain with G-Cter in SUMO); alternate cross-link involves residue Lys-740.

The protein belongs to the poly(A) polymerase family. In terms of assembly, monomer. Found in a complex with CPSF1, FIP1L1 and PAPOLA. Interacts with AHCYL1 and FIP1L1; the interaction with AHCYL1 seems to increase interaction with FIP1L1. Interacts with NUDT21; the interaction is diminished by acetylation. Interacts with KPNB1; the interaction promotes PAP nuclear import and is inhibited by acetylation of PAP. The cofactor is Mg(2+). Mn(2+) is required as a cofactor. Post-translationally, polysumoylated. Varying sumoylation depending on tissue- and cell-type. Highly sumoylated in bladder and NIH 3T3 cells. Sumoylation is required for nuclear localization and enhances PAP stability. Desumoylated by SENP1. Inhibits polymerase activity. In terms of processing, hyperphosphorylation on multiple CDK2 consensus and non-consensus sites in the C-terminal Ser/Thr-rich region represses PAP activity in late M-phase. Phosphorylation/dephosphorylation may regulate the interaction between PAP and CPSF. Acetylated in the C-terminus. Acetylation decreases interaction with NUDT21 and KPNB1, and inhibits nuclear localization through inhibiting binding to the importin alpha/beta complex.

The protein localises to the cytoplasm. Its subcellular location is the nucleus. It catalyses the reaction RNA(n) + ATP = RNA(n)-3'-adenine ribonucleotide + diphosphate. In terms of biological role, polymerase that creates the 3'-poly(A) tail of mRNA's. Also required for the endoribonucleolytic cleavage reaction at some polyadenylation sites. May acquire specificity through interaction with a cleavage and polyadenylation specificity factor (CPSF) at its C-terminus. This Homo sapiens (Human) protein is Poly(A) polymerase alpha (PAPOLA).